Consider the following 163-residue polypeptide: Ribosome maturation factor RimP (163 aa).

Residues Ala66 to Pro85 form a disordered region.

This sequence belongs to the RimP family.

The protein resides in the cytoplasm. Its function is as follows. Required for maturation of 30S ribosomal subunits. The chain is Ribosome maturation factor RimP from Kocuria rhizophila (strain ATCC 9341 / DSM 348 / NBRC 103217 / DC2201).